The primary structure comprises 243 residues: Large ribosomal subunit protein uL2 (243 aa).

Disordered stretches follow at residues Met1–Arg23 and Pro204–Arg243. Residues Lys228 to Arg243 show a composition bias toward basic residues.

This sequence belongs to the universal ribosomal protein uL2 family. Part of the 50S ribosomal subunit. Forms a bridge to the 30S subunit in the 70S ribosome.

One of the primary rRNA binding proteins. Required for association of the 30S and 50S subunits to form the 70S ribosome, for tRNA binding and peptide bond formation. It has been suggested to have peptidyltransferase activity; this is somewhat controversial. Makes several contacts with the 16S rRNA in the 70S ribosome. This chain is Large ribosomal subunit protein uL2, found in Methanopyrus kandleri (strain AV19 / DSM 6324 / JCM 9639 / NBRC 100938).